Consider the following 323-residue polypeptide: o-succinylbenzoate synthase (323 aa).

The active-site Proton donor is lysine 134. Mg(2+) contacts are provided by aspartate 162, glutamate 191, and aspartate 214. Lysine 236 functions as the Proton acceptor in the catalytic mechanism.

Belongs to the mandelate racemase/muconate lactonizing enzyme family. MenC type 1 subfamily. A divalent metal cation serves as cofactor.

It carries out the reaction (1R,6R)-6-hydroxy-2-succinyl-cyclohexa-2,4-diene-1-carboxylate = 2-succinylbenzoate + H2O. It participates in quinol/quinone metabolism; 1,4-dihydroxy-2-naphthoate biosynthesis; 1,4-dihydroxy-2-naphthoate from chorismate: step 4/7. It functions in the pathway quinol/quinone metabolism; menaquinone biosynthesis. Its function is as follows. Converts 2-succinyl-6-hydroxy-2,4-cyclohexadiene-1-carboxylate (SHCHC) to 2-succinylbenzoate (OSB). This chain is o-succinylbenzoate synthase, found in Proteus mirabilis (strain HI4320).